The following is a 1934-amino-acid chain: Tudor domain-containing protein 15 (1934 aa).

6 consecutive Tudor domains span residues Asn59 to Leu117, Cys289 to Val347, Lys531 to Leu589, Pro799 to Leu856, Asp1011 to Leu1070, and Lys1342 to Val1401. Residues Val1490–Asn1510 form a disordered region. Residues Arg1491–Glu1504 show a composition bias toward basic and acidic residues. Tudor domains follow at residues Ser1574 to Ile1633 and Phe1780 to Leu1838.

This is Tudor domain-containing protein 15 (TDRD15) from Homo sapiens (Human).